The chain runs to 785 residues: Leucyl aminopeptidase (785 aa).

Substrate is bound by residues E106 and 238–242 (GAMEN). Residue H273 participates in Zn(2+) binding. E274 (proton acceptor) is an active-site residue. Zn(2+)-binding residues include H277 and E296.

It belongs to the peptidase M1 family. Co-immunoprecipitates with the 60 kDa chaperonin. The cofactor is Zn(2+). Can be phosphorylated by cell extracts.

Its subcellular location is the cytoplasm. It catalyses the reaction Release of an N-terminal amino acid, Xaa-|-Yaa-, in which Xaa is preferably Leu, but may be other amino acids including Pro although not Arg or Lys, and Yaa may be Pro. Amino acid amides and methyl esters are also readily hydrolyzed, but rates on arylamides are exceedingly low.. Functionally, preferentially acts as a leucyl-aminopeptidase, although it also has activity against other substrates. The chain is Leucyl aminopeptidase (ape2) from Saccharolobus solfataricus (strain ATCC 35092 / DSM 1617 / JCM 11322 / P2) (Sulfolobus solfataricus).